Reading from the N-terminus, the 697-residue chain is SPX domain-containing membrane protein OsI_08463 (697 aa).

Residues 2-145 form the SPX domain; sequence VNFGKRLMAD…GYKFTDYYVS (144 aa). 11 helical membrane-spanning segments follow: residues 247-267, 278-298, 315-335, 338-356, 375-395, 411-431, 513-533, 544-564, 576-596, 604-624, and 670-690; these read FMSL…TYII, LGAA…AQVF, LVFS…AYDV, LTVL…ARAV, AGFV…AGLL, LPGW…WISF, LLIY…SSVV, TVAM…VIVG, ILVA…RFTS, VSSA…NLSL, and LLNV…VATF.

Belongs to the major facilitator superfamily.

Its subcellular location is the membrane. The protein is SPX domain-containing membrane protein OsI_08463 of Oryza sativa subsp. indica (Rice).